The following is a 443-amino-acid chain: Glycerol-3-phosphate acyltransferase 3-like (443 aa).

A run of 3 helical transmembrane segments spans residues 15-35 (WFSC…SLGI), 146-166 (ISLR…CILL), and 170-190 (ITLT…VGFL). The HXXXXD motif signature appears at 238 to 243 (HTSPID). The helical transmembrane segment at 358–378 (IMSYLLRMMTSWAIVCNVWYL) threads the bilayer.

Belongs to the 1-acyl-sn-glycerol-3-phosphate acyltransferase family.

Its subcellular location is the endoplasmic reticulum membrane. The enzyme catalyses sn-glycerol 3-phosphate + an acyl-CoA = a 1-acyl-sn-glycero-3-phosphate + CoA. It catalyses the reaction a 1-acyl-sn-glycero-3-phosphate + an acyl-CoA = a 1,2-diacyl-sn-glycero-3-phosphate + CoA. It functions in the pathway glycerolipid metabolism; triacylglycerol biosynthesis. Its pathway is phospholipid metabolism; CDP-diacylglycerol biosynthesis; CDP-diacylglycerol from sn-glycerol 3-phosphate: step 1/3. Functionally, may transfer the acyl-group from acyl-coA to the sn-1 position of glycerol-3-phosphate, an essential step in glycerolipid biosynthesis. Also transfers the acyl-group from acyl-coA to the sn-2 position of 1-acyl-sn-glycerol-3-phosphate (lysophosphatidic acid, or LPA), forming 1,2-diacyl-sn-glycerol-3-phosphate (phosphatidic acid, or PA). This is Glycerol-3-phosphate acyltransferase 3-like (agpat9l) from Danio rerio (Zebrafish).